A 129-amino-acid polypeptide reads, in one-letter code: Large ribosomal subunit protein bL12 (129 aa).

Belongs to the bacterial ribosomal protein bL12 family. Homodimer. Part of the ribosomal stalk of the 50S ribosomal subunit. Forms a multimeric L10(L12)X complex, where L10 forms an elongated spine to which 2 to 4 L12 dimers bind in a sequential fashion. Binds GTP-bound translation factors.

Its function is as follows. Forms part of the ribosomal stalk which helps the ribosome interact with GTP-bound translation factors. Is thus essential for accurate translation. The sequence is that of Large ribosomal subunit protein bL12 from Treponema pallidum (strain Nichols).